A 212-amino-acid polypeptide reads, in one-letter code: MAIGLVGKKCGMTRVFTEAGASIPVTVVEISANRITQVKNTDVDGYQAIQVTTGTRRDSRVTAAQKGHFAKAGVAAGRGVWEFRANDSDLEGREIGGEILADLFEQGQMVDVTGSSKGKGFQGPVKRHNFSMQDATHGNSVSHRAHGSTGQNQSPGKVFKGKKMAGQMGNKRVTVQGLEVISVDAEKGLLVIKGAIPGATGGDVIVRPSVKA.

The segment covering 135-155 (ATHGNSVSHRAHGSTGQNQSP) has biased composition (polar residues). The tract at residues 135-162 (ATHGNSVSHRAHGSTGQNQSPGKVFKGK) is disordered. N5-methylglutamine is present on glutamine 153.

It belongs to the universal ribosomal protein uL3 family. In terms of assembly, part of the 50S ribosomal subunit. Forms a cluster with proteins L14 and L19. Methylated by PrmB.

One of the primary rRNA binding proteins, it binds directly near the 3'-end of the 23S rRNA, where it nucleates assembly of the 50S subunit. The chain is Large ribosomal subunit protein uL3 from Psychrobacter arcticus (strain DSM 17307 / VKM B-2377 / 273-4).